Consider the following 1337-residue polypeptide: Zinc finger protein 335 (1337 aa).

Disordered regions lie at residues 1–108 and 198–226; these read MEEN…LVHS and GPTS…PPAP. 2 stretches are compositionally biased toward low complexity: residues 31 to 45 and 54 to 63; these read TSEA…AATV and SGVGQSSDGG. The C2H2-type 1 zinc-finger motif lies at 248–271; it reads FKCKMCQYRSSTKATLLRHMRERH. Residues 278 to 444 form a disordered region; sequence AAAAATGKRG…PPRRRGRPSR (167 aa). Positions 302–332 are enriched in acidic residues; sequence DRPEEEEEDDDIVDAGAIDDLEEDSDYNPAE. Over residues 351–362 the composition is skewed to basic residues; that stretch reads RPRRRPGRPRKL. The segment covering 363 to 372 has biased composition (basic and acidic residues); it reads PRLETSDLHD. Polar residues predominate over residues 378–388; it reads LVSSQSTQSPP. 8 consecutive C2H2-type zinc fingers follow at residues 466–488, 496–518, 524–546, 563–585, 591–613, 622–644, 650–673, and 679–702; these read YLCR…VNSH, FRCL…MFNH, YKCD…AAVH, FPCP…MKTH, HMCD…LLTH, FKCE…QLSH, FKCS…AVKH, and FACE…RCRH. 2 disordered regions span residues 733 to 767 and 963 to 999; these read LKQQ…TPPL and QCGG…ASHT. Over residues 741 to 756 the composition is skewed to pro residues; that stretch reads PGPPLSSPGPEAPQEP. 2 positions are modified to phosphoserine: serine 976 and serine 1007. 4 consecutive C2H2-type zinc fingers follow at residues 1019-1041, 1047-1069, 1075-1097, and 1103-1126; these read FSCK…KRAH, FKCP…MAQH, HQCN…MLTH, and FSCH…QRLH. A Glycyl lysine isopeptide (Lys-Gly) (interchain with G-Cter in SUMO2) cross-link involves residue lysine 1022. Residue serine 1149 is modified to Phosphoserine.

The protein belongs to the krueppel C2H2-type zinc-finger protein family. In terms of assembly, interacts with NCOA6; may enhance ligand-dependent transcriptional activation by nuclear hormone receptors. Interacts with CNOT6. Interacts with CNOT9; the interaction is direct. Component of a nuclear receptor-mediated transcription complex composed of at least ZNF335, CCAR2 and EMSY; the complex stimulates the transcription of nuclear receptor target genes such as SOX9 and HOXA1. Within the complex interacts with EMSY and interacts (via C-terminus) with CCAR2. Interacts with members of histone H3'Lys4'(H3K4) methyltransferase complexes ASH2L, CXXC1, KMT2A/MLL1, RBBP5, SETD1A and WDR5. Component of a histone methylation complex composed of at least ZNF335, RBBP5, ASH2L and WDR5; the complex may have histone H3-specific methyltransferase activity, however does not have specificity for 'Lys-4' of histone H3. Interacts with RBBP5 and WDR5. Interacts with ASHL2. Components of this complex may associate with components of the ZNF335-CCAR2-EMSY nuclear receptor-mediated transcription complex to form a complex at least composed of ZNF335, HCFC1, CCAR2, EMSY, MKI67, RBBP5, ASH2L and WDR5. Within this complex also interacts with HCFC1 and MKI67. As to expression, expressed at low levels in cerebral cortex, hippocampus and cerebellum (at protein level).

It is found in the nucleus. Component or associated component of some histone methyltransferase complexes may regulate transcription through recruitment of those complexes on gene promoters. Enhances ligand-dependent transcriptional activation by nuclear hormone receptors. Plays an important role in neural progenitor cell proliferation and self-renewal through the regulation of specific genes involved brain development, including REST. Also controls the expression of genes involved in somatic development and regulates, for instance, lymphoblast proliferation. This chain is Zinc finger protein 335 (Znf335), found in Mus musculus (Mouse).